The sequence spans 113 residues: Nucleoid-associated protein RHA1_ro04210 (113 aa).

This sequence belongs to the YbaB/EbfC family. As to quaternary structure, homodimer.

It is found in the cytoplasm. It localises to the nucleoid. Binds to DNA and alters its conformation. May be involved in regulation of gene expression, nucleoid organization and DNA protection. The chain is Nucleoid-associated protein RHA1_ro04210 from Rhodococcus jostii (strain RHA1).